Here is a 214-residue protein sequence, read N- to C-terminus: External core antigen (214 aa).

An N-terminal signal peptide occupies residues 1–19; sequence MQLFHLCLIISCTCPTVQA. The segment at 25–27 is HBEAG; sequence GWL. Residues 165 to 214 are disordered; the sequence is NAPILSTLPETTVVRRRDRGRSPRRRTPSPRRRRSQSPRRRRSQSRESQC. A compositionally biased stretch (basic residues) spans 178 to 207; sequence VRRRDRGRSPRRRTPSPRRRRSQSPRRRRS. One copy of the 1; half-length repeat lies at 186 to 192; it reads SPRRRTP. The 3 X 8 AA repeats of S-P-R-R-R-R-S-Q stretch occupies residues 186 to 208; sequence SPRRRTPSPRRRRSQSPRRRRSQ. A propeptide spanning residues 186–214 is cleaved from the precursor; that stretch reads SPRRRTPSPRRRRSQSPRRRRSQSRESQC. 2 consecutive repeat copies span residues 193 to 200 and 201 to 208.

Belongs to the orthohepadnavirus precore antigen family. In terms of assembly, homodimerizes. In terms of processing, phosphorylated. Post-translationally, cleaved by host furin.

It localises to the secreted. It is found in the host nucleus. Its function is as follows. May regulate immune response to the intracellular capsid in acting as a T-cell tolerogen, by having an immunoregulatory effect which prevents destruction of infected cells by cytotoxic T-cells. This immune regulation may predispose to chronicity during perinatal infections and prevent severe liver injury during adult infections. The protein is External core antigen of Homo sapiens (Human).